Here is a 355-residue protein sequence, read N- to C-terminus: Zinc finger A20 and AN1 domain-containing stress-associated protein 3 (355 aa).

The A20-type zinc finger occupies 199–233; sequence AGQPVLCASGCGFYGNPATLDMCSVCYRQHCLLNG. Residues Cys-205, Cys-209, Cys-221, Cys-224, Cys-295, Cys-298, Cys-309, Cys-311, Cys-316, His-319, His-325, and Cys-327 each coordinate Zn(2+). The AN1-type zinc-finger motif lies at 289-335; that stretch reads KAPANRCASCKKKVGLLGFACRCGATYCGTHRYPEKHACGFDFKGAS.

In terms of biological role, may be involved in environmental stress response. The protein is Zinc finger A20 and AN1 domain-containing stress-associated protein 3 (SAP3) of Oryza sativa subsp. japonica (Rice).